Consider the following 400-residue polypeptide: Enoyl-[acyl-carrier-protein] reductase [NADH] (400 aa).

Residues 48–53 (GSSSGY), 74–75 (FE), 111–112 (DA), and 139–140 (LA) each bind NAD(+). Tyr225 contacts substrate. Tyr235 functions as the Proton donor in the catalytic mechanism. NAD(+) is bound by residues Lys244 and 273–275 (VVT).

This sequence belongs to the TER reductase family. As to quaternary structure, monomer.

It carries out the reaction a 2,3-saturated acyl-[ACP] + NAD(+) = a (2E)-enoyl-[ACP] + NADH + H(+). Its pathway is lipid metabolism; fatty acid biosynthesis. Involved in the final reduction of the elongation cycle of fatty acid synthesis (FAS II). Catalyzes the reduction of a carbon-carbon double bond in an enoyl moiety that is covalently linked to an acyl carrier protein (ACP). This chain is Enoyl-[acyl-carrier-protein] reductase [NADH], found in Shewanella frigidimarina (strain NCIMB 400).